A 556-amino-acid chain; its full sequence is Glucose-6-phosphate isomerase (556 aa).

The active-site Proton donor is the E363. Residues H394 and K522 contribute to the active site.

The protein belongs to the GPI family.

It localises to the cytoplasm. It carries out the reaction alpha-D-glucose 6-phosphate = beta-D-fructose 6-phosphate. The protein operates within carbohydrate biosynthesis; gluconeogenesis. It functions in the pathway carbohydrate degradation; glycolysis; D-glyceraldehyde 3-phosphate and glycerone phosphate from D-glucose: step 2/4. Its function is as follows. Catalyzes the reversible isomerization of glucose-6-phosphate to fructose-6-phosphate. The polypeptide is Glucose-6-phosphate isomerase (Frankia casuarinae (strain DSM 45818 / CECT 9043 / HFP020203 / CcI3)).